We begin with the raw amino-acid sequence, 431 residues long: MVERYSLSPMKDLWTEEAKYRRWLEVELAVTRAYEELGMIPKGVTERIRNNAKIDVELFKKIEEKTNHDVVAFVEGIGSMIGEDSRFFHYGLTSSDVLDTANSLALVEAGKILLESLKEFCDVLWEVANRYKHTPTIGRTHGVHAEPTSFGLKVLGWYSEMKRNVQRLERAIEEVSYGKISGAVGNYANVPPEVEEKALSYLGLKPEPVSTQVVPRDRHAFYLSTLAIVAAGIERIAVEIRHLQRTEVLEVEEPFRKGQRGSSAMPHKKNPITCERLTGLSRMMRAYVDPSLENIALWHERDISHSSVERYVFPDATQTLYYMIVTATNVVRNMKVNEERMKKNIDLTKGLVFSQRVLLKLIEKGLTRKEAYDIVQRNALKTWNSEKHFLEYLLEDEEVKKLVTKEELEELFDISYYLKHVDHIFERFEKE.

Residues 4–5, 67–69, and 93–94 each bind N(6)-(1,2-dicarboxyethyl)-AMP; these read RY, NHD, and TS. His141 serves as the catalytic Proton donor/acceptor. Gln212 contributes to the N(6)-(1,2-dicarboxyethyl)-AMP binding site. The Proton donor/acceptor role is filled by Ser262. N(6)-(1,2-dicarboxyethyl)-AMP contacts are provided by residues Ser263, 268–270, and 307–311; these read KKN and SVERY.

It belongs to the lyase 1 family. Adenylosuccinate lyase subfamily. In terms of assembly, homotetramer. Residues from neighboring subunits contribute catalytic and substrate-binding residues to each active site.

The catalysed reaction is N(6)-(1,2-dicarboxyethyl)-AMP = fumarate + AMP. It carries out the reaction (2S)-2-[5-amino-1-(5-phospho-beta-D-ribosyl)imidazole-4-carboxamido]succinate = 5-amino-1-(5-phospho-beta-D-ribosyl)imidazole-4-carboxamide + fumarate. It participates in purine metabolism; AMP biosynthesis via de novo pathway; AMP from IMP: step 2/2. The protein operates within purine metabolism; IMP biosynthesis via de novo pathway; 5-amino-1-(5-phospho-D-ribosyl)imidazole-4-carboxamide from 5-amino-1-(5-phospho-D-ribosyl)imidazole-4-carboxylate: step 2/2. Its function is as follows. Catalyzes two reactions in de novo purine nucleotide biosynthesis. Catalyzes the breakdown of 5-aminoimidazole- (N-succinylocarboxamide) ribotide (SAICAR or 2-[5-amino-1-(5-phospho-beta-D-ribosyl)imidazole-4-carboxamido]succinate) to 5-aminoimidazole-4-carboxamide ribotide (AICAR or 5-amino-1-(5-phospho-beta-D-ribosyl)imidazole-4-carboxamide) and fumarate, and of adenylosuccinate (ADS or N(6)-(1,2-dicarboxyethyl)-AMP) to adenosine monophosphate (AMP) and fumarate. The protein is Adenylosuccinate lyase (purB) of Thermotoga maritima (strain ATCC 43589 / DSM 3109 / JCM 10099 / NBRC 100826 / MSB8).